The primary structure comprises 397 residues: Tryptophan synthase beta chain (397 aa).

Position 88 is an N6-(pyridoxal phosphate)lysine (lysine 88).

It belongs to the TrpB family. As to quaternary structure, tetramer of two alpha and two beta chains. Pyridoxal 5'-phosphate is required as a cofactor.

It carries out the reaction (1S,2R)-1-C-(indol-3-yl)glycerol 3-phosphate + L-serine = D-glyceraldehyde 3-phosphate + L-tryptophan + H2O. It participates in amino-acid biosynthesis; L-tryptophan biosynthesis; L-tryptophan from chorismate: step 5/5. Functionally, the beta subunit is responsible for the synthesis of L-tryptophan from indole and L-serine. The sequence is that of Tryptophan synthase beta chain from Haemophilus influenzae (strain 86-028NP).